Consider the following 164-residue polypeptide: Putative histone H2B type 2-D (164 aa).

Over residues 1 to 12 (MPEPAKFAPAPK) the composition is skewed to low complexity. The tract at residues 1-33 (MPEPAKFAPAPKKGSKKAVTKAQKKDGKKRKRS) is disordered. The residue at position 2 (proline 2) is an N-acetylproline. An N6-(2-hydroxyisobutyryl)lysine; alternate modification is found at lysine 6. N6-(beta-hydroxybutyryl)lysine; alternate is present on residues lysine 6 and lysine 12. N6-acetyllysine; alternate occurs at positions 6, 12, and 13. Residue lysine 6 is modified to N6-butyryllysine; alternate. Lysine 6, lysine 12, and lysine 13 each carry N6-crotonyllysine; alternate. An N6-lactoyllysine; alternate mark is found at lysine 6 and lysine 12. A Glycyl lysine isopeptide (Lys-Gly) (interchain with G-Cter in SUMO2); alternate cross-link involves residue lysine 6. At lysine 13 the chain carries N6-(2-hydroxyisobutyryl)lysine; alternate. Phosphoserine; by STK4/MST1 is present on serine 15. N6-acetyllysine; alternate occurs at positions 16, 17, 21, and 24. N6-crotonyllysine; alternate occurs at positions 16, 17, 21, and 24. Lysine 16, lysine 17, lysine 21, and lysine 24 each carry N6-lactoyllysine; alternate. 2 positions are modified to N6-(beta-hydroxybutyryl)lysine; alternate: lysine 17 and lysine 21. Lysine 17 is modified (N6-glutaryllysine; alternate). An N6-(2-hydroxyisobutyryl)lysine; alternate mark is found at lysine 21 and lysine 24. An N6-butyryllysine; alternate modification is found at lysine 21. Residue lysine 21 forms a Glycyl lysine isopeptide (Lys-Gly) (interchain with G-Cter in SUMO2); alternate linkage. Lysine 25 carries the post-translational modification N6-(2-hydroxyisobutyryl)lysine. Lysine 35 bears the N6-(2-hydroxyisobutyryl)lysine; alternate mark. Lysine 35 carries the post-translational modification N6-(beta-hydroxybutyryl)lysine; alternate. Position 35 is an N6-crotonyllysine; alternate (lysine 35). Lysine 35 carries the N6-glutaryllysine; alternate modification. Residue lysine 35 is modified to N6-succinyllysine; alternate. Lysine 35 is covalently cross-linked (Glycyl lysine isopeptide (Lys-Gly) (interchain with G-Cter in ubiquitin); alternate). Phosphoserine; by AMPK is present on serine 37. 3 positions are modified to N6-(2-hydroxyisobutyryl)lysine; alternate: lysine 44, lysine 47, and lysine 58. Lysine 44 carries the N6-lactoyllysine; alternate modification. 2 positions are modified to N6-glutaryllysine; alternate: lysine 44 and lysine 47. N6-methyllysine; alternate is present on lysine 47. At lysine 58 the chain carries N6,N6-dimethyllysine; alternate. Arginine 80 is subject to Dimethylated arginine. Residue lysine 86 is modified to N6-(2-hydroxyisobutyryl)lysine; alternate. At lysine 86 the chain carries N6-(beta-hydroxybutyryl)lysine; alternate. N6-acetyllysine; alternate is present on lysine 86. Residue lysine 86 is modified to N6-lactoyllysine; alternate. At lysine 86 the chain carries N6,N6,N6-trimethyllysine; alternate. 2 positions are modified to omega-N-methylarginine: arginine 87 and arginine 93. The segment at 111-140 (PCPRAPRRSPSTPAPSESLPGPGARSLPPS) is disordered.

The protein belongs to the histone H2B family. In terms of assembly, the nucleosome is a histone octamer containing two molecules each of H2A, H2B, H3 and H4 assembled in one H3-H4 heterotetramer and two H2A-H2B heterodimers. The octamer wraps approximately 147 bp of DNA. Post-translationally, phosphorylation at Ser-37 (H2BS36ph) by AMPK in response to stress promotes transcription. Phosphorylated on Ser-15 (H2BS14ph) by STK4/MST1 during apoptosis; which facilitates apoptotic chromatin condensation. Also phosphorylated on Ser-15 in response to DNA double strand breaks (DSBs), and in correlation with somatic hypermutation and immunoglobulin class-switch recombination. In terms of processing, crotonylation (Kcr) is specifically present in male germ cells and marks testis-specific genes in post-meiotic cells, including X-linked genes that escape sex chromosome inactivation in haploid cells. Crotonylation marks active promoters and enhancers and confers resistance to transcriptional repressors. It is also associated with post-meiotically activated genes on autosomes. Lactylated in macrophages by EP300/P300 by using lactoyl-CoA directly derived from endogenous or exogenous lactate, leading to stimulates gene transcription.

Its subcellular location is the nucleus. It localises to the chromosome. Core component of nucleosome. Nucleosomes wrap and compact DNA into chromatin, limiting DNA accessibility to the cellular machineries which require DNA as a template. Histones thereby play a central role in transcription regulation, DNA repair, DNA replication and chromosomal stability. DNA accessibility is regulated via a complex set of post-translational modifications of histones, also called histone code, and nucleosome remodeling. The protein is Putative histone H2B type 2-D of Homo sapiens (Human).